A 409-amino-acid polypeptide reads, in one-letter code: N-acetylglucosamine-6-phosphate deacetylase (409 aa).

Glutamate 143 lines the a divalent metal cation pocket. Alanine 154–histidine 155 lines the substrate pocket. A divalent metal cation contacts are provided by histidine 211 and histidine 232. Substrate contacts are provided by residues asparagine 235 to alanine 236, arginine 243, and aspartate 269 to histidine 272. The Proton donor/acceptor role is filled by aspartate 294. Substrate is bound at residue leucine 328–glycine 330.

It belongs to the metallo-dependent hydrolases superfamily. NagA family. The cofactor is a divalent metal cation.

The catalysed reaction is N-acetyl-D-glucosamine 6-phosphate + H2O = D-glucosamine 6-phosphate + acetate. It functions in the pathway amino-sugar metabolism; N-acetylneuraminate degradation. Functionally, hydrolyzes the N-glycolyl group from N-glycolylglucosamine 6-phosphate (GlcNGc-6-P) in the N-glycolylneuraminic acid (Neu5Gc) degradation pathway. This is N-acetylglucosamine-6-phosphate deacetylase (AMDHD2) from Bos taurus (Bovine).